The sequence spans 94 residues: Integration host factor subunit beta (94 aa).

This sequence belongs to the bacterial histone-like protein family. As to quaternary structure, heterodimer of an alpha and a beta chain.

Its function is as follows. This protein is one of the two subunits of integration host factor, a specific DNA-binding protein that functions in genetic recombination as well as in transcriptional and translational control. The protein is Integration host factor subunit beta of Brucella abortus (strain S19).